A 1978-amino-acid chain; its full sequence is Sodium channel protein type 8 subunit alpha (1978 aa).

Disordered stretches follow at residues 1 to 20 (MAAR…FTPE) and 28 to 62 (RIAE…LEAG). The Cytoplasmic segment spans residues 1–132 (MAARVLAPPG…RIAIKILIHS (132 aa)). Positions 28-61 (RIAESKLKKPPKADGSHREDDEDSKPKPNSDLEA) are enriched in basic and acidic residues. The I repeat unit spans residues 114 to 442 (ILSPFNLIRR…KAMLEQLKKQ (329 aa)). A helical transmembrane segment spans residues 133–151 (VFSMIIMCTILTNCVFMTF). The Extracellular portion of the chain corresponds to 152-158 (SNPPEWS). A helical membrane pass occupies residues 159-179 (KNVEYTFTGIYTFESLVKIIA). At 180 to 193 (RGFCIDGFTFLRDP) the chain is on the cytoplasmic side. The chain crosses the membrane as a helical span at residues 194–211 (WNWLDFSVIMMAYVTEFV). Residues 212 to 217 (DLGNVS) lie on the Extracellular side of the membrane. Asparagine 215 is a glycosylation site (N-linked (GlcNAc...) asparagine). Residues 218 to 234 (ALRTFRVLRALKTISVI) form a helical membrane-spanning segment. The Cytoplasmic segment spans residues 235 to 253 (PGLKTIVGALIQSVKKLSD). The chain crosses the membrane as a helical span at residues 254–273 (VMILTVFCLSVFALIGLQLF). Residues 274 to 355 (MGNLRNKCVV…PNYGYTSFDT (82 aa)) lie on the Extracellular side of the membrane. Residues cysteine 281 and cysteine 333 are joined by a disulfide bond. N-linked (GlcNAc...) asparagine glycosylation is found at asparagine 289, asparagine 295, asparagine 308, and asparagine 326. The pore-forming intramembrane region spans 356–380 (FSWAFLALFRLMTQDYWENLYQLTL). Na(+) is bound at residue glutamate 373. The Extracellular segment spans residues 381–387 (RAAGKTY). Residues 388–408 (MIFFVLVIFVGSFYLVNLILA) traverse the membrane as a helical segment. Over 409–751 (VVAMAYEEQN…EIVNLIVMDP (343 aa)) the chain is Cytoplasmic. Disordered stretches follow at residues 446–530 (AQAA…KAFR) and 576–597 (DPGS…SEGR). The segment covering 473–486 (SPRSSSELSKLSSK) has biased composition (low complexity). Residues 489-500 (KERRNRRKKRKQ) show a composition bias toward basic residues. 2 stretches are compositionally biased toward basic and acidic residues: residues 501–530 (KELS…KAFR) and 586–597 (DEHSTVEESEGR). Serine 518 and serine 520 each carry phosphoserine. One copy of the II repeat lies at 733 to 1005 (CHPYWIKLKE…QISVIRIKKG (273 aa)). The chain crosses the membrane as a helical span at residues 752–770 (FVDLAITICIVLNTLFMAM). The Extracellular portion of the chain corresponds to 771–781 (EHHPMTPQFEH). The chain crosses the membrane as a helical span at residues 782–801 (VLAVGNLVFTGIFTAEMFLK). Over 802 to 815 (LIAMDPYYYFQEGW) the chain is Cytoplasmic. The chain crosses the membrane as a helical span at residues 816 to 835 (NIFDGFIVSLSLMELGLADV). Over 836 to 837 (EG) the chain is Extracellular. The helical transmembrane segment at 838-855 (LSVLRSFRLLRVFKLAKS) threads the bilayer. Residues 856 to 871 (WPTLNMLIKIIGNSVG) are Cytoplasmic-facing. A helical transmembrane segment spans residues 872-890 (ALGNLTLVLAIIVFIFAVV). The Extracellular portion of the chain corresponds to 891 to 919 (GMQLFGKSYKECVCKISQECKLPRWHMND). Cysteine 904 and cysteine 910 are joined by a disulfide. Positions 920-940 (FFHSFLIVFRVLCGEWIETMW) form an intramembrane region, pore-forming. Residues glutamate 934 and glutamate 937 each contribute to the Na(+) site. At 941–953 (DCMEVAGQAMCLI) the chain is on the extracellular side. Residues cysteine 942 and cysteine 951 are joined by a disulfide bond. The chain crosses the membrane as a helical span at residues 954–974 (VFMMVMVIGNLVVLNLFLALL). Residues 975–1197 (LSSFSADNLA…TCFLIVEHNW (223 aa)) lie on the Cytoplasmic side of the membrane. The disordered stretch occupies residues 1105–1146 (NLNTEDVSSESDPEGSKDKLDDTSSSEGSTIDIKPEVEEVPV). The III repeat unit spans residues 1178–1493 (LGKSWWILRK…KKYYNAMKKL (316 aa)). The chain crosses the membrane as a helical span at residues 1198-1215 (FETFIIFMILLSSGALAF). Residues 1216–1228 (EDIYIEQRKTIRT) lie on the Extracellular side of the membrane. Residues 1229–1247 (ILEYADKVFTYIFILEMLL) traverse the membrane as a helical segment. The Cytoplasmic portion of the chain corresponds to 1248 to 1261 (KWTAYGFVKFFTNA). The chain crosses the membrane as a helical span at residues 1262-1280 (WCWLDFLIVAVSLVSLIAN). At 1281 to 1288 (ALGYSELG) the chain is on the extracellular side. A helical membrane pass occupies residues 1289–1307 (AIKSLRTLRALRPLRALSR). At 1308 to 1324 (FEGMRVVVNALVGAIPS) the chain is on the cytoplasmic side. Residues 1325–1344 (IMNVLLVCLIFWLIFSIMGV) form a helical membrane-spanning segment. Topologically, residues 1345-1397 (NLFAGKYHYCFNETSEIRFEIDEVNNKTDCEKLMEGNNTEIRWKNVKINFDNV) are extracellular. Cysteine 1354 and cysteine 1374 are joined by a disulfide. Asparagine 1356, asparagine 1370, and asparagine 1381 each carry an N-linked (GlcNAc...) asparagine glycan. Residues 1398–1419 (GAGYLALLQVATFKGWMDIMYA) constitute an intramembrane region (pore-forming). The Extracellular segment spans residues 1420 to 1436 (AVDSRKPDEQPDYEGNI). Residues 1437-1458 (YMYIYFVIFIIFGSFFTLNLFI) form a helical membrane-spanning segment. At 1459-1521 (GVIIDNFNQQ…IVFDFVTQQA (63 aa)) the chain is on the cytoplasmic side. The residue at position 1495 (serine 1495) is a Phosphoserine; by PKC. One copy of the IV repeat lies at 1502–1799 (IPRPLNKIQG…WEKFDPDATQ (298 aa)). Residues 1522–1539 (FDIVIMMLICLNMVTMMV) form a helical membrane-spanning segment. At 1540–1550 (ETDTQSKQMEN) the chain is on the extracellular side. The chain crosses the membrane as a helical span at residues 1551 to 1569 (ILYWINLVFVIFFTCECVL). The Cytoplasmic segment spans residues 1570 to 1581 (KMFALRHYYFTI). Residues 1582–1599 (GWNIFDFVVVILSIVGMF) form a helical membrane-spanning segment. At 1600–1612 (LADIIEKYFVSPT) the chain is on the extracellular side. The chain crosses the membrane as a helical span at residues 1613–1629 (LFRVIRLARIGRILRLI). At 1630–1648 (KGAKGIRTLLFALMMSLPA) the chain is on the cytoplasmic side. Residues 1649-1666 (LFNIGLLLFLVMFIFSIF) traverse the membrane as a helical segment. The Extracellular segment spans residues 1667–1688 (GMSNFAYVKHEAGIDDMFNFET). Positions 1689–1711 (FGNSMICLFQITTSAGWDGLLLP) form an intramembrane region, pore-forming. The Extracellular portion of the chain corresponds to 1712–1740 (ILNRPPDCSLDKEHPGSGFKGDCGNPSVG). Cysteine 1719 and cysteine 1734 are disulfide-bonded. Residues 1741 to 1763 (IFFFVSYIIISFLIVVNMYIAII) form a helical membrane-spanning segment. Over 1764 to 1978 (LENFSVATEE…RQKEVRESKC (215 aa)) the chain is Cytoplasmic. Residues 1893-1922 (EEVSAVVLQRAYRGHLARRGFICRKITSNK) enclose the IQ domain. The interval 1924-1978 (ENGGTHREKKESTPSTASLPSYDSVTKPDKEKQQRAEEGRRERAKRQKEVRESKC) is disordered. Residues 1936–1947 (TPSTASLPSYDS) are compositionally biased toward polar residues. Residues 1949-1978 (TKPDKEKQQRAEEGRRERAKRQKEVRESKC) show a composition bias toward basic and acidic residues.

The protein belongs to the sodium channel (TC 1.A.1.10) family. Nav1.6/SCN8A subfamily. As to quaternary structure, the voltage-sensitive sodium channel consists of an ion-conducting pore-forming alpha subunit regulated by one or more beta-1 (SCN1B), beta-2 (SCN2B), beta-3 (SCN3B) and/or beta-4 (SCN4B) subunits. Beta-1 (SCN1B) and beta-3 (SCN3B) are non-covalently associated with alpha, while beta-2 (SCN2B) and beta-4 (SCN4B) are covalently linked by disulfide bonds. Interacts with FGF13. Interacts with NEDD4 and NEDD4L. Interacts with FGF14, GBG3, GBB2 and SCN1B. Interacts with TMEM233. Interacts with the conotoxin GVIIJ. Interacts with the scorpion toxin BMK M1. Interacts with CALM1; the interaction modulates the inactivation rate of SCN8A. Post-translationally, may be ubiquitinated by NEDD4L; which would promote its endocytosis. Phosphorylation at Ser-1495 by PKC in a highly conserved cytoplasmic loop slows inactivation of the sodium channel and reduces peak sodium currents. Expressed in the hippocampus (at protein level). Expressed in brain, cerebellum and spinal cord. In terms of tissue distribution, expressed in non-neuronal tissues, such as monocytes/macrophages.

It localises to the cell membrane. It is found in the cell projection. Its subcellular location is the axon. The protein resides in the cytoplasmic vesicle. The protein localises to the podosome. It carries out the reaction Na(+)(in) = Na(+)(out). In terms of biological role, pore-forming subunit of a voltage-gated sodium channel complex assuming opened or closed conformations in response to the voltage difference across membranes and through which sodium ions selectively pass along their electrochemical gradient. Contributes to neuronal excitability by regulating action potential threshold and propagation. Its function is as follows. More specifically expressed in non-neuronal cells, could play a role in sodium release from intracellular compartments and participate in the control of podosomes formation and macrophages adhesion and movement. The chain is Sodium channel protein type 8 subunit alpha from Mus musculus (Mouse).